The following is a 337-amino-acid chain: uncharacterized protein (337 aa).

The protein belongs to the mimivirus R69 family.

This is an uncharacterized protein from Acanthamoeba polyphaga mimivirus (APMV).